Reading from the N-terminus, the 937-residue chain is Protein Niban 1 (937 aa).

A lipid anchor (N-myristoyl glycine) is attached at Gly2. Residues Ser578, Ser581, Ser595, Ser601, and Ser646 each carry the phosphoserine modification. Residues 584 to 595 (DLKTSMGSNQAS) show a composition bias toward polar residues. 2 disordered regions span residues 584 to 710 (DLKT…GSLR) and 724 to 891 (SAPE…LGGN). Low complexity predominate over residues 640-651 (ASISGSSPPSGE). A compositionally biased stretch (polar residues) spans 655–681 (VSVSGVDNSAGNPLSADNSAGPLSSHL). A compositionally biased stretch (basic and acidic residues) spans 688 to 701 (EPPKDEETAHKRPE). A phosphoserine mark is found at Ser708 and Ser768. 2 stretches are compositionally biased toward polar residues: residues 802–817 (PTSQSTGEGLTENTSC) and 855–869 (VTVTPQEDATLSSNP).

It belongs to the Niban family. Detected in brain, lung, spleen and skeletal muscle. Expressed in small renal tumors but not in normal kidney.

It is found in the cytoplasm. The protein resides in the membrane. In terms of biological role, regulates phosphorylation of a number of proteins involved in translation regulation including EIF2A, EIF4EBP1 and RPS6KB1. May be involved in the endoplasmic reticulum stress response. This is Protein Niban 1 from Rattus norvegicus (Rat).